A 285-amino-acid chain; its full sequence is Protease HtpX homolog (285 aa).

The next 2 membrane-spanning stretches (helical) occupy residues Thr-7–Gly-27 and Gly-30–Asp-50. Residue His-131 participates in Zn(2+) binding. Glu-132 is a catalytic residue. His-135 lines the Zn(2+) pocket. A run of 2 helical transmembrane segments spans residues Ile-146 to Gly-166 and Ile-177 to Ile-197. A Zn(2+)-binding site is contributed by Glu-202.

This sequence belongs to the peptidase M48B family. Zn(2+) serves as cofactor.

It is found in the cell inner membrane. The polypeptide is Protease HtpX homolog (Burkholderia thailandensis (strain ATCC 700388 / DSM 13276 / CCUG 48851 / CIP 106301 / E264)).